The sequence spans 194 residues: Large ribosomal subunit protein uL10 (194 aa).

Residues 172–187 (EGGAAEAPAEAATEAP) show a composition bias toward low complexity. A disordered region spans residues 172-194 (EGGAAEAPAEAATEAPAEAEAES).

Belongs to the universal ribosomal protein uL10 family. Part of the ribosomal stalk of the 50S ribosomal subunit. The N-terminus interacts with L11 and the large rRNA to form the base of the stalk. The C-terminus forms an elongated spine to which L12 dimers bind in a sequential fashion forming a multimeric L10(L12)X complex.

In terms of biological role, forms part of the ribosomal stalk, playing a central role in the interaction of the ribosome with GTP-bound translation factors. In Rhodococcus erythropolis (strain PR4 / NBRC 100887), this protein is Large ribosomal subunit protein uL10.